The following is a 325-amino-acid chain: Cytochrome c1, heme protein, mitochondrial (325 aa).

The N-terminal 84 residues, 1 to 84 (MAAAAATLRG…AVALHSAVSA (84 aa)), are a transit peptide targeting the mitochondrion. Topologically, residues 85–281 (SDLELHPPSY…TFLRWAAEPE (197 aa)) are mitochondrial intermembrane. In terms of domain architecture, Cytochrome c spans 108–209 (TSIRRGFQVY…IVRARHGGED (102 aa)). Heme c contacts are provided by Cys-121, Cys-124, His-125, and Met-244. A helical membrane pass occupies residues 282 to 315 (HDHRKRMGLKMLLMMGLLLPLVYAMKRHKWSVLK). Over 316–325 (SRKLAYRPPK) the chain is Mitochondrial matrix.

The protein belongs to the cytochrome c family. As to quaternary structure, component of the ubiquinol-cytochrome c oxidoreductase (cytochrome b-c1 complex, complex III, CIII), a multisubunit enzyme composed of 11 subunits. The complex is composed of 3 respiratory subunits cytochrome b, cytochrome c1 and Rieske protein UQCRFS1, 2 core protein subunits UQCRC1/QCR1 and UQCRC2/QCR2, and 6 low-molecular weight protein subunits UQCRH/QCR6, UQCRB/QCR7, UQCRQ/QCR8, UQCR10/QCR9, UQCR11/QCR10 and subunit 9, the cleavage product of Rieske protein UQCRFS1. The complex exists as an obligatory dimer and forms supercomplexes (SCs) in the inner mitochondrial membrane with NADH-ubiquinone oxidoreductase (complex I, CI) and cytochrome c oxidase (complex IV, CIV), resulting in different assemblies (supercomplex SCI(1)III(2)IV(1) and megacomplex MCI(2)III(2)IV(2)). Interacts with FLVCR2; this interaction occurs in the absence of heme and is disrupted upon heme binding. Heme c is required as a cofactor.

It is found in the mitochondrion inner membrane. It carries out the reaction a quinol + 2 Fe(III)-[cytochrome c](out) = a quinone + 2 Fe(II)-[cytochrome c](out) + 2 H(+)(out). Component of the ubiquinol-cytochrome c oxidoreductase, a multisubunit transmembrane complex that is part of the mitochondrial electron transport chain which drives oxidative phosphorylation. The respiratory chain contains 3 multisubunit complexes succinate dehydrogenase (complex II, CII), ubiquinol-cytochrome c oxidoreductase (cytochrome b-c1 complex, complex III, CIII) and cytochrome c oxidase (complex IV, CIV), that cooperate to transfer electrons derived from NADH and succinate to molecular oxygen, creating an electrochemical gradient over the inner membrane that drives transmembrane transport and the ATP synthase. The cytochrome b-c1 complex catalyzes electron transfer from ubiquinol to cytochrome c, linking this redox reaction to translocation of protons across the mitochondrial inner membrane, with protons being carried across the membrane as hydrogens on the quinol. In the process called Q cycle, 2 protons are consumed from the matrix, 4 protons are released into the intermembrane space and 2 electrons are passed to cytochrome c. Cytochrome c1 is a catalytic core subunit containing a c-type heme. It transfers electrons from the [2Fe-2S] iron-sulfur cluster of the Rieske protein to cytochrome c. In Bos taurus (Bovine), this protein is Cytochrome c1, heme protein, mitochondrial (CYC1).